Here is a 712-residue protein sequence, read N- to C-terminus: Translation initiation factor eIF2B subunit epsilon (712 aa).

A disordered region spans residues 1–20 (MAGKKGQKKSGLGNHGKNSD). Phosphoserine is present on residues Ser-478, Ser-481, Ser-507, Ser-525, Ser-538, and Ser-707. The W2 domain occupies 539-710 (EFEDEDFEKE…QNADEESSSE (172 aa)).

The protein belongs to the eIF-2B gamma/epsilon subunits family. Component of the translation initiation factor 2B (eIF2B) complex which is a heterodecamer of two sets of five different subunits: alpha, beta, gamma, delta and epsilon. Subunits alpha, beta and delta comprise a regulatory subcomplex and subunits epsilon and gamma comprise a catalytic subcomplex. Within the complex, the hexameric regulatory complex resides at the center, with the two heterodimeric catalytic subcomplexes bound on opposite sides.

The protein resides in the cytoplasm. The protein localises to the cytosol. In terms of biological role, acts as a catalytic component of the translation initiation factor 2B (eIF2B) complex, which catalyzes the exchange of GDP for GTP on eukaryotic initiation factor 2 (eIF2) and is regulated by phosphorylated eIF2. Its guanine nucleotide exchange factor activity is repressed when bound to eIF2 complex phosphorylated on the alpha subunit, thereby limiting the amount of methionyl-initiator methionine tRNA available to the ribosome and consequently global translation is repressed. It activates the synthesis of GCN4 in yeast under amino acid starvation conditions by suppressing the inhibitory effects of multiple AUG codons present in the leader of GCN4 mRNA. It may promote either repression or activation of GCN4 expression depending on amino acid availability. GCD6 and GCD7 repress GCN4 expression at the translational level by ensuring that ribosomes which have translated UORF1 will reinitiate at UORF2, -3, or -4 and thus fail to reach the GCN4 start site. This is Translation initiation factor eIF2B subunit epsilon (GCD6) from Saccharomyces cerevisiae (strain ATCC 204508 / S288c) (Baker's yeast).